We begin with the raw amino-acid sequence, 357 residues long: UDP-N-acetylglucosamine--N-acetylmuramyl-(pentapeptide) pyrophosphoryl-undecaprenol N-acetylglucosamine transferase (357 aa).

Residues 12-14 (TAG), Arg166, Ser196, and Gln291 contribute to the UDP-N-acetyl-alpha-D-glucosamine site.

The protein belongs to the glycosyltransferase 28 family. MurG subfamily.

It is found in the cell membrane. The catalysed reaction is di-trans,octa-cis-undecaprenyl diphospho-N-acetyl-alpha-D-muramoyl-L-alanyl-D-glutamyl-meso-2,6-diaminopimeloyl-D-alanyl-D-alanine + UDP-N-acetyl-alpha-D-glucosamine = di-trans,octa-cis-undecaprenyl diphospho-[N-acetyl-alpha-D-glucosaminyl-(1-&gt;4)]-N-acetyl-alpha-D-muramoyl-L-alanyl-D-glutamyl-meso-2,6-diaminopimeloyl-D-alanyl-D-alanine + UDP + H(+). It functions in the pathway cell wall biogenesis; peptidoglycan biosynthesis. Functionally, cell wall formation. Catalyzes the transfer of a GlcNAc subunit on undecaprenyl-pyrophosphoryl-MurNAc-pentapeptide (lipid intermediate I) to form undecaprenyl-pyrophosphoryl-MurNAc-(pentapeptide)GlcNAc (lipid intermediate II). This chain is UDP-N-acetylglucosamine--N-acetylmuramyl-(pentapeptide) pyrophosphoryl-undecaprenol N-acetylglucosamine transferase, found in Geobacillus kaustophilus (strain HTA426).